The primary structure comprises 69 residues: ATP synthase F(0) complex subunit 8 (69 aa).

Residues 8–24 (TWLLTITLMILALFCIY) traverse the membrane as a helical segment. K55 is subject to N6-acetyllysine; alternate. K55 is modified (N6-succinyllysine; alternate). An N6-acetyllysine modification is found at K58.

The protein belongs to the ATPase protein 8 family. Component of the ATP synthase complex composed at least of ATP5F1A/subunit alpha, ATP5F1B/subunit beta, ATP5MC1/subunit c (homooctomer), MT-ATP6/subunit a, MT-ATP8/subunit 8, ATP5ME/subunit e, ATP5MF/subunit f, ATP5MG/subunit g, ATP5MK/subunit k, ATP5MJ/subunit j, ATP5F1C/subunit gamma, ATP5F1D/subunit delta, ATP5F1E/subunit epsilon, ATP5PF/subunit F6, ATP5PB/subunit b, ATP5PD/subunit d, ATP5PO/subunit OSCP. ATP synthase complex consists of a soluble F(1) head domain (subunits alpha(3) and beta(3)) - the catalytic core - and a membrane F(0) domain - the membrane proton channel (subunits c, a, 8, e, f, g, k and j). These two domains are linked by a central stalk (subunits gamma, delta, and epsilon) rotating inside the F1 region and a stationary peripheral stalk (subunits F6, b, d, and OSCP). Interacts with PRICKLE3.

The protein localises to the mitochondrion membrane. Subunit 8, of the mitochondrial membrane ATP synthase complex (F(1)F(0) ATP synthase or Complex V) that produces ATP from ADP in the presence of a proton gradient across the membrane which is generated by electron transport complexes of the respiratory chain. ATP synthase complex consist of a soluble F(1) head domain - the catalytic core - and a membrane F(1) domain - the membrane proton channel. These two domains are linked by a central stalk rotating inside the F(1) region and a stationary peripheral stalk. During catalysis, ATP synthesis in the catalytic domain of F(1) is coupled via a rotary mechanism of the central stalk subunits to proton translocation. In vivo, can only synthesize ATP although its ATP hydrolase activity can be activated artificially in vitro. Part of the complex F(0) domain. In Osphranter robustus (Wallaroo), this protein is ATP synthase F(0) complex subunit 8.